Reading from the N-terminus, the 197-residue chain is Small ribosomal subunit protein uS4B (197 aa).

Positions 88 to 151 (CRLDNIAYRI…RKNDEFADNF (64 aa)) constitute an S4 RNA-binding domain.

Belongs to the universal ribosomal protein uS4 family. As to quaternary structure, part of the 30S ribosomal subunit. Contacts protein S5. The interaction surface between S4 and S5 is involved in control of translational fidelity.

In terms of biological role, one of the primary rRNA binding proteins, it binds directly to 16S rRNA where it nucleates assembly of the body of the 30S subunit. Its function is as follows. With S5 and S12 plays an important role in translational accuracy. This is Small ribosomal subunit protein uS4B from Clostridium botulinum (strain Hall / ATCC 3502 / NCTC 13319 / Type A).